We begin with the raw amino-acid sequence, 422 residues long: Mannose-1-phosphate guanylyltransferase regulatory subunit alpha-A (422 aa).

Residues 2–253 are substrate-binding domain; sequence LKAVILIGGP…DRFWSQIKSA (252 aa). The GDP-alpha-D-mannose site is built by Glu-85 and Gln-249. Residues 275–422 are hexapeptide repeat domain; sequence LATNTEGGAK…NRSFKNQIIL (148 aa). Residues 358–386 form a C-loop region; it reads TPSDPNPNDPYAKIDSETLFRDGKLTPSI.

Belongs to the transferase hexapeptide repeat family. In terms of assembly, component of the GMPPA-GMPPB mannose-1-phosphate guanylyltransferase complex composed of 4 gmppa subunits and 8 gmppb subunits; the complex is organized into three layers, a central layer made up of 2 gmppa dimers sandwiched between two layers each made up of 2 gmppb dimers.

Its pathway is nucleotide-sugar biosynthesis; GDP-alpha-D-mannose biosynthesis; GDP-alpha-D-mannose from alpha-D-mannose 1-phosphate (GTP route): step 1/1. Its function is as follows. Regulatory subunit of the GMPPA-GMPPB mannose-1-phosphate guanylyltransferase complex; reduces the catalytic activity of GMPPB when part of the complex. Mediates allosteric feedback inhibition of GMPPB catalytic activity upon binding GDP-alpha-D-mannose. Together with GMPPB regulates GDP-alpha-D-mannose levels. One of two paralogs (gmppaa and gmppab) that may have redundant functions. This chain is Mannose-1-phosphate guanylyltransferase regulatory subunit alpha-A (gmppaa), found in Danio rerio (Zebrafish).